The following is a 672-amino-acid chain: Penicillin-binding protein activator LpoA (672 aa).

An N-terminal signal peptide occupies residues 1-26; it reads MLPFHLVRTQAGRVIPVLLAALFLAG. C27 is lipidated: N-palmitoyl cysteine. C27 carries S-diacylglycerol cysteine lipidation. The tract at residues 298–336 is disordered; it reads APPTDTAQAGQVTPSSDGQNAQSPAPYSDQAVASTTPAP. A compositionally biased stretch (polar residues) spans 305–322; that stretch reads QAGQVTPSSDGQNAQSPA. A compositionally biased stretch (low complexity) spans 327-336; the sequence is QAVASTTPAP.

The protein belongs to the LpoA family. As to quaternary structure, interacts with PBP1a.

It is found in the cell outer membrane. In terms of biological role, regulator of peptidoglycan synthesis that is essential for the function of penicillin-binding protein 1A (PBP1a). This chain is Penicillin-binding protein activator LpoA, found in Pectobacterium parmentieri (strain WPP163) (Pectobacterium wasabiae (strain WPP163)).